The chain runs to 368 residues: Chaperone protein DnaJ (368 aa).

The J domain occupies 5–70 (DYYQVLGVPR…KKRKLYDTHG (66 aa)). The CR-type zinc-finger motif lies at 124-201 (GVERQIQIPT…CNGAGRVEDH (78 aa)). Residues Cys-137, Cys-140, Cys-153, Cys-156, Cys-175, Cys-178, Cys-189, and Cys-192 each coordinate Zn(2+). 4 CXXCXGXG motif repeats span residues 137–144 (CTHCHGSG), 153–160 (CGTCRGSG), 175–182 (CPHCGGRG), and 189–196 (CKVCNGAG).

It belongs to the DnaJ family. In terms of assembly, homodimer. The cofactor is Zn(2+).

Its subcellular location is the cytoplasm. In terms of biological role, participates actively in the response to hyperosmotic and heat shock by preventing the aggregation of stress-denatured proteins and by disaggregating proteins, also in an autonomous, DnaK-independent fashion. Unfolded proteins bind initially to DnaJ; upon interaction with the DnaJ-bound protein, DnaK hydrolyzes its bound ATP, resulting in the formation of a stable complex. GrpE releases ADP from DnaK; ATP binding to DnaK triggers the release of the substrate protein, thus completing the reaction cycle. Several rounds of ATP-dependent interactions between DnaJ, DnaK and GrpE are required for fully efficient folding. Also involved, together with DnaK and GrpE, in the DNA replication of plasmids through activation of initiation proteins. This Xylella fastidiosa (strain M23) protein is Chaperone protein DnaJ.